A 183-amino-acid chain; its full sequence is Translocon-associated protein subunit beta (183 aa).

Residues 1–17 (MRLLSFVVLALFAVTQA) form the signal peptide. Over 18–149 (EEGARLLASK…DRRFSPHFLD (132 aa)) the chain is Lumenal. N-linked (GlcNAc...) asparagine glycans are attached at residues Asn-88 and Asn-104. Residues 150-169 (WAAFGVMTLPSIGIPLLLWY) traverse the membrane as a helical segment. Over 170-183 (SSKRKYDTPKTKKN) the chain is Cytoplasmic.

This sequence belongs to the TRAP-beta family. In terms of assembly, heterotetramer of TRAP-alpha, TRAP-beta, TRAP-delta and TRAP-gamma. Interacts with STING1.

It localises to the endoplasmic reticulum membrane. In terms of biological role, TRAP proteins are part of a complex whose function is to bind calcium to the ER membrane and thereby regulate the retention of ER resident proteins. This is Translocon-associated protein subunit beta (SSR2) from Homo sapiens (Human).